The chain runs to 416 residues: UPF0761 membrane protein Mpe_A1422 (416 aa).

The next 6 helical transmembrane spans lie at 63–83 (IALV…PMFG), 120–140 (LGTV…LTID), 159–179 (VLVY…SLTL), 198–218 (LSVL…AGLF), 234–256 (GGLF…LAQV), and 271–291 (IFLI…VIAA).

It belongs to the UPF0761 family.

It is found in the cell inner membrane. The polypeptide is UPF0761 membrane protein Mpe_A1422 (Methylibium petroleiphilum (strain ATCC BAA-1232 / LMG 22953 / PM1)).